The primary structure comprises 62 residues: Small ribosomal subunit protein bS21 (62 aa).

The tract at residues 38 to 62 (YEKPSERRKRKMNAAVRKNRRTRHG) is disordered.

It belongs to the bacterial ribosomal protein bS21 family.

This chain is Small ribosomal subunit protein bS21, found in Gemmatimonas aurantiaca (strain DSM 14586 / JCM 11422 / NBRC 100505 / T-27).